A 290-amino-acid polypeptide reads, in one-letter code: Probable protein phosphatase 2C 20 (290 aa).

In terms of domain architecture, PPM-type phosphatase spans 31–278; sequence AHGYDFVKGK…DDISCIVPCF (248 aa). Mn(2+) is bound by residues Asp68, Gly69, Asp230, and Asp269.

The protein belongs to the PP2C family. Mg(2+) is required as a cofactor. Requires Mn(2+) as cofactor.

The catalysed reaction is O-phospho-L-seryl-[protein] + H2O = L-seryl-[protein] + phosphate. It catalyses the reaction O-phospho-L-threonyl-[protein] + H2O = L-threonyl-[protein] + phosphate. May be involved in defense signaling. In Arabidopsis thaliana (Mouse-ear cress), this protein is Probable protein phosphatase 2C 20 (PPC3-1.2).